Reading from the N-terminus, the 250-residue chain is 26S proteasome non-ATPase regulatory subunit 8 (250 aa).

One can recognise a PCI domain in the interval 63 to 233 (HDFETFDDYI…QEKPVNLDTV (171 aa)).

The protein belongs to the proteasome subunit S14 family.

In terms of biological role, acts as a regulatory subunit of the 26S proteasome which is involved in the ATP-dependent degradation of ubiquitinated proteins. The sequence is that of 26S proteasome non-ATPase regulatory subunit 8 from Caenorhabditis elegans.